The primary structure comprises 291 residues: Glycine--tRNA ligase alpha subunit (291 aa).

This sequence belongs to the class-II aminoacyl-tRNA synthetase family. Tetramer of two alpha and two beta subunits.

The protein localises to the cytoplasm. It carries out the reaction tRNA(Gly) + glycine + ATP = glycyl-tRNA(Gly) + AMP + diphosphate. The chain is Glycine--tRNA ligase alpha subunit from Rhizorhabdus wittichii (strain DSM 6014 / CCUG 31198 / JCM 15750 / NBRC 105917 / EY 4224 / RW1) (Sphingomonas wittichii).